Reading from the N-terminus, the 366-residue chain is Glutathione S-transferase omega-like 3 (366 aa).

Cysteine 46 is an active-site residue. The 153-residue stretch at 197 to 349 (PRSLEAQITE…LGYTRSQPRV (153 aa)) folds into the GST C-terminal domain.

Belongs to the GST superfamily. Omega family.

The protein resides in the cytoplasm. The enzyme catalyses RX + glutathione = an S-substituted glutathione + a halide anion + H(+). Its function is as follows. Active as '1-Cys' thiol transferase against beta-hydroxyethyl disulfide (HED), as dehydroascorbate reductase and as dimethylarsinic acid reductase, while not active against the standard GST substrate 1-chloro-2,4-dinitrobenzene (CDNB). In Saccharomyces cerevisiae (strain ATCC 204508 / S288c) (Baker's yeast), this protein is Glutathione S-transferase omega-like 3 (GTO3).